A 348-amino-acid polypeptide reads, in one-letter code: Lipooligosaccharide heptosyltransferase 2 (348 aa).

It belongs to the glycosyltransferase 9 family.

It catalyses the reaction an L-alpha-D-Hep-(1-&gt;5)-[alpha-Kdo-(2-&gt;4)]-alpha-Kdo-(2-&gt;6)-lipid A + ADP-L-glycero-beta-D-manno-heptose = an L-alpha-D-Hep-(1-&gt;3)-L-alpha-D-Hep-(1-&gt;5)-[alpha-Kdo-(2-&gt;4)]-alpha-Kdo-(2-&gt;6)-lipid A + ADP + H(+). Its pathway is bacterial outer membrane biogenesis; LOS core biosynthesis. Glycosyltransferase involved in the biosynthesis of the core oligosaccharide region of lipooligosaccharide (LOS). Catalyzes the addition of a heptose unit to the heptosyl-Kdo2-lipid A module. The protein is Lipooligosaccharide heptosyltransferase 2 of Haemophilus ducreyi (strain 35000HP / ATCC 700724).